The following is a 60-amino-acid chain: Cytotoxin SP15c (60 aa).

4 disulfide bridges follow: Cys-3–Cys-21, Cys-14–Cys-38, Cys-42–Cys-53, and Cys-54–Cys-59.

Belongs to the three-finger toxin family. Short-chain subfamily. Type IA cytotoxin sub-subfamily. In terms of assembly, monomer in solution; Homodimer and oligomer in the presence of negatively charged lipids forming a pore with a size ranging between 20 and 30 Angstroms. As to expression, expressed by the venom gland.

It is found in the secreted. It localises to the target cell membrane. In terms of biological role, shows cytolytic activity on many different cells by forming pore in lipid membranes. In vivo, increases heart rate or kills the animal by cardiac arrest. In addition, it binds to heparin with high affinity, interacts with Kv channel-interacting protein 1 (KCNIP1) in a calcium-independent manner, and binds to integrin alpha-V/beta-3 (ITGAV/ITGB3) with moderate affinity. In Naja atra (Chinese cobra), this protein is Cytotoxin SP15c.